The sequence spans 86 residues: Large ribosomal subunit protein uL23 (86 aa).

The protein belongs to the universal ribosomal protein uL23 family. As to quaternary structure, part of the 50S ribosomal subunit. Contacts protein L29.

In terms of biological role, binds to 23S rRNA. One of the proteins that surrounds the polypeptide exit tunnel on the outside of the ribosome. In Methanococcus maripaludis (strain C5 / ATCC BAA-1333), this protein is Large ribosomal subunit protein uL23.